The sequence spans 485 residues: ETS translocation variant 4 (485 aa).

Lys-6 participates in a covalent cross-link: Glycyl lysine isopeptide (Lys-Gly) (interchain with G-Cter in SUMO2). Disordered stretches follow at residues 79–114 and 135–214; these read PDFH…RKPP and IAIK…QHQL. Lys-95 is covalently cross-linked (Glycyl lysine isopeptide (Lys-Gly) (interchain with G-Cter in SUMO)). Ser-100 is modified (phosphoserine). Lys-138 is covalently cross-linked (Glycyl lysine isopeptide (Lys-Gly) (interchain with G-Cter in SUMO2)). Phosphoserine is present on residues Ser-139 and Ser-148. Over residues 158–171 the composition is skewed to low complexity; the sequence is QQQSLLRASSSSQS. Residue Ser-215 is modified to Phosphoserine. Glycyl lysine isopeptide (Lys-Gly) (interchain with G-Cter in SUMO) cross-links involve residues Lys-227 and Lys-261. Lys-323 participates in a covalent cross-link: Glycyl lysine isopeptide (Lys-Gly) (interchain with G-Cter in SUMO2). The ETS DNA-binding region spans 342–422; the sequence is LQLWQFLVAL…AGERYVYKFV (81 aa).

It belongs to the ETS family. In terms of processing, sumoylated; enhanced upon ERK/MAP kinase pathway activation it positively regulates the transcriptional activator capacity. Sumoylation at Lys-95 probably requires phosphorylation at Ser-100. Transiently polysumoylated and desumoylated by SENP1. Sumoylation is a prerequisite to polyubiquitination which in turn increases proteasomal-mediated degradation. Probably polyubiquitinated by RNF4 and deubiquitinated by USP2. As to expression, epididymis and brain.

The protein resides in the nucleus. Transcriptional activator. May play a role in keratinocyte differentiation. In Mus musculus (Mouse), this protein is ETS translocation variant 4 (Etv4).